We begin with the raw amino-acid sequence, 349 residues long: Anthranilate phosphoribosyltransferase (349 aa).

5-phospho-alpha-D-ribose 1-diphosphate contacts are provided by residues glycine 82, 85–86, 92–95, 110–118, and serine 122; these read GD, NVST, and KHGNRAVSG. Glycine 82 serves as a coordination point for anthranilate. Serine 94 provides a ligand contact to Mg(2+). Asparagine 113 lines the anthranilate pocket. Residue arginine 168 coordinates anthranilate. Residues aspartate 227 and glutamate 228 each coordinate Mg(2+).

Belongs to the anthranilate phosphoribosyltransferase family. As to quaternary structure, homodimer. It depends on Mg(2+) as a cofactor.

The enzyme catalyses N-(5-phospho-beta-D-ribosyl)anthranilate + diphosphate = 5-phospho-alpha-D-ribose 1-diphosphate + anthranilate. The protein operates within amino-acid biosynthesis; L-tryptophan biosynthesis; L-tryptophan from chorismate: step 2/5. Its function is as follows. Catalyzes the transfer of the phosphoribosyl group of 5-phosphorylribose-1-pyrophosphate (PRPP) to anthranilate to yield N-(5'-phosphoribosyl)-anthranilate (PRA). This is Anthranilate phosphoribosyltransferase from Pseudomonas fluorescens (strain ATCC BAA-477 / NRRL B-23932 / Pf-5).